The chain runs to 147 residues: Ribonuclease VapC43 (147 aa).

A PINc domain is found at 3 to 139; the sequence is CVDVNVLVYA…ARFRRLRWRH (137 aa). Residues aspartate 5 and aspartate 108 each coordinate Mg(2+).

The protein belongs to the PINc/VapC protein family. Requires Mg(2+) as cofactor.

Its function is as follows. Toxic component of a type II toxin-antitoxin (TA) system. An RNase. Its toxic effect is neutralized by coexpression with cognate antitoxin VapB43. This chain is Ribonuclease VapC43, found in Mycobacterium tuberculosis (strain CDC 1551 / Oshkosh).